The chain runs to 233 residues: tRNA (guanine-N(7)-)-methyltransferase (233 aa).

S-adenosyl-L-methionine is bound by residues Glu62, Glu87, Asp114, and Asp136. Asp136 is a catalytic residue. Substrate-binding positions include Lys140, Asp172, and 211 to 214 (TRYE).

It belongs to the class I-like SAM-binding methyltransferase superfamily. TrmB family.

It carries out the reaction guanosine(46) in tRNA + S-adenosyl-L-methionine = N(7)-methylguanosine(46) in tRNA + S-adenosyl-L-homocysteine. It functions in the pathway tRNA modification; N(7)-methylguanine-tRNA biosynthesis. In terms of biological role, catalyzes the formation of N(7)-methylguanine at position 46 (m7G46) in tRNA. The sequence is that of tRNA (guanine-N(7)-)-methyltransferase from Erythrobacter litoralis (strain HTCC2594).